A 409-amino-acid polypeptide reads, in one-letter code: DEP domain-containing mTOR-interacting protein (409 aa).

Met-1 is subject to N-acetylmethionine. The segment covering 1-10 (MEEGSSGGSG) has biased composition (gly residues). The segment at 1-23 (MEEGSSGGSGSSDSNAGGSGGVQ) is disordered. DEP domains lie at 36-119 (TGEQ…RFRK) and 146-219 (PETT…QFRM). The short motif at 217–235 (FRMNFRRRRRLMELLNETS) is the DDEX motif element. A Phosphoserine modification is found at Ser-235. Position 241 is a phosphothreonine (Thr-241). Ser-244 and Ser-258 each carry phosphoserine. At Thr-259 the chain carries Phosphothreonine. A phosphoserine mark is found at Ser-263, Ser-265, Ser-280, Ser-282, Ser-283, Ser-286, and Ser-287. A BetaTrCP degron motif motif is present at residues 286 to 291 (SSGYFS). Tyr-289 is modified (phosphotyrosine). Ser-291 and Ser-293 each carry phosphoserine. Thr-295 is modified (phosphothreonine). Ser-297, Ser-298, and Ser-299 each carry phosphoserine. The 78-residue stretch at 330 to 407 (TFTIVGDAVG…TIVMEVMEEL (78 aa)) folds into the PDZ domain.

Associated component of the mechanistic target of rapamycin complex 1 (mTORC1) which contains MTOR, MLST8 and RPTOR. Associated component of the mechanistic target of rapamycin complex 2 (mTORC2) which contains MTOR, MLST8, PROTOR1, RICTOR, MAPKAP1 and DEPTOR. Interacts (via PDZ domain) with MTOR; interacts with MTOR within both mTORC1 and mTORC2. Interacts (via PDZ domain) with MINAR1 (via N-terminus). Interacts with SIK3. Phosphorylation weakens interaction with MTOR within mTORC1 and mTORC2. Phosphorylated at Ser-286, Ser-287 and Ser-291 in response to mitogenic stimulation by MTOR: DEPTOR is either directly phosphorylated by MTOR or indirectly via proteins kinases that are activated by MTOR, such as CK1/CSNK1A1. Phosphorylation at Ser-286, Ser-287 and Ser-291 promotes ubiquitination by the SCF(BTRC) complex, followed by degradation. Phosphorylation at Ser-235 by MAPK3/ERK1 promotes deubiquitination by USP7, enhancing its stability. Phosphorylation at Tyr-291 by SYK impairs its interaction with MTOR, promoting mTORC1 and mTORC2 signaling. In terms of processing, ubiquitinated; leading to proteasomal degradation. Ubiquitination by the SCF(BTRC) and SCF(FBXW11) complexes following phosphorylation at Ser-286, Ser-287 and Ser-291 by MTOR, leads to its degradation by the proteasome. Deubiquitinated by OTUB1 in response to amino acid via a non-canonical mechanism, leading to DEPTOR stability. Deubiquitinated by USP7 following phosphorylation at Ser-235, promoting its stability.

It localises to the lysosome membrane. Inhibited upon phosphatidic acid-binding: phosphatidic acid produced upon mitogenic stimulation promotes DEPTOR dissociatiom from the mTORC1 and mTORC2 complexes, leading to their activation. Specifically binds unsaturated phosphatidic acid, such as 16:0-18:1, 18:0-18:1 and di-18:1. Inhibited when nutrients are present via a feedback loop: phosphorylation by MTOR promotes DEPTOR ubiquitination and degradation. In terms of biological role, negative regulator of the mTORC1 and mTORC2 complexes: inhibits the protein kinase activity of MTOR, thereby inactivating both complexes. DEPTOR inhibits mTORC1 and mTORC2 to induce autophagy. In contrast to AKT1S1/PRAS40, only partially inhibits mTORC1 activity. This is DEP domain-containing mTOR-interacting protein from Mus musculus (Mouse).